A 312-amino-acid chain; its full sequence is tRNA pseudouridine synthase B (312 aa).

The Nucleophile role is filled by D46. Substrate-binding residues include Y74, Y177, and L198.

Belongs to the pseudouridine synthase TruB family. Type 1 subfamily.

The enzyme catalyses uridine(55) in tRNA = pseudouridine(55) in tRNA. In terms of biological role, responsible for synthesis of pseudouridine from uracil-55 in the psi GC loop of transfer RNAs. The protein is tRNA pseudouridine synthase B of Buchnera aphidicola subsp. Acyrthosiphon pisum (strain APS) (Acyrthosiphon pisum symbiotic bacterium).